The primary structure comprises 105 residues: Integration host factor (105 aa).

The short motif at 64-71 (LPKVGKVK) is the H2TH motif, binds DNA element. Residues 82 to 94 (APTRRLRGLGDRQ) form a lid, binds DNA region.

Belongs to the actinobacterial IHF (aIHF) family. Homodimer in solution. Binds DNA as a monomer.

It localises to the cytoplasm. In terms of biological role, a nucleoid-associated protein (NAP) required for septum formation and normal cell division as well as for DNA segregation. Binds about 135 sites across the chromosome, most of which are genes involved in virulence; most DNA-binding sites are immediately upstream of transcription start sites. When mIHF is depleted most of the genes are down-regulated. Binds supercoiled and linear dsDNA in a concentration-dependent manner, probably non-sequence specifically. Binding compacts DNA, protecting it from degradation. Initial binding to supercoiled DNA opens it fully, followed by bending and compaction. Bends and thus compacts linear DNA. Binds DNA via 2 sites, forms left-handed loops on linear DNA; at low concentrations unwinds larger cosmids (42.6 kb) then collapses and condenses DNA as protein levels rise. Forms mostly left-handed loops on condensing cosmid DNA. This chain is Integration host factor, found in Mycobacterium tuberculosis (strain ATCC 25618 / H37Rv).